The chain runs to 269 residues: HTH-type transcriptional regulator Rv0792c (269 aa).

Positions 20–88 constitute an HTH gntR-type domain; it reads VPASTQLAEA…QGLGTFVADP (69 aa). Residues 48–67 constitute a DNA-binding region (H-T-H motif); the sequence is ERELIDRSGLSRVTVRAAVG.

Homodimer.

With respect to regulation, DNA-binding activity is increased in the presence of L-arabinose and inhibited by the small molecule I-OMe-Tyrphostin. Its function is as follows. Transcriptional regulator required for survival in oxidative stress and for establishing infection in host tissues. Regulates the expression of a subset of genes involved in oxidative stress adaptation and virulence, enabling the bacteria to adapt and persist in host tissues. This Mycobacterium tuberculosis (strain ATCC 25618 / H37Rv) protein is HTH-type transcriptional regulator Rv0792c.